The primary structure comprises 776 residues: Mitochondrial intermediate peptidase (776 aa).

A mitochondrion-targeting transit peptide spans 1–28 (MFVRFYKRLDRQYIQSQRRWILSSNKCL). A disordered region spans residues 48 to 71 (DHWEESQAQNTSSEQDNKGKNSSY). The span at 53-71 (SQAQNTSSEQDNKGKNSSY) shows a compositional bias: polar residues. H567 lines the Zn(2+) pocket. E568 is an active-site residue. Residues H571 and H574 each coordinate Zn(2+).

This sequence belongs to the peptidase M3 family. It depends on Zn(2+) as a cofactor.

The protein localises to the mitochondrion matrix. The catalysed reaction is Release of an N-terminal octapeptide as second stage of processing of some proteins imported into the mitochondrion.. Functionally, cleaves proteins, imported into the mitochondrion, to their mature size. While most mitochondrial precursor proteins are processed to the mature form in one step by mitochondrial processing peptidase (MPP), the sequential cleavage by MIP of an octapeptide after initial processing by MPP is a required step for a subgroup of nuclear-encoded precursor proteins destined for the matrix or the inner membrane. In Eremothecium gossypii (strain ATCC 10895 / CBS 109.51 / FGSC 9923 / NRRL Y-1056) (Yeast), this protein is Mitochondrial intermediate peptidase (OCT1).